Reading from the N-terminus, the 305-residue chain is NAD kinase (305 aa).

The active-site Proton acceptor is the Asp82. Residues 82–83 (DG), 156–157 (ND), Arg184, Asp186, 197–202 (TAYALS), Ala221, and Gln255 contribute to the NAD(+) site.

It belongs to the NAD kinase family. The cofactor is a divalent metal cation.

The protein localises to the cytoplasm. It catalyses the reaction NAD(+) + ATP = ADP + NADP(+) + H(+). Involved in the regulation of the intracellular balance of NAD and NADP, and is a key enzyme in the biosynthesis of NADP. Catalyzes specifically the phosphorylation on 2'-hydroxyl of the adenosine moiety of NAD to yield NADP. The sequence is that of NAD kinase from Cupriavidus pinatubonensis (strain JMP 134 / LMG 1197) (Cupriavidus necator (strain JMP 134)).